The chain runs to 297 residues: MRSRTYHDQSVCGPYGSQRTDCDRDTDAGSDTDVHGAQVATQIRTDTLLHSSLWVNIALAGLSILVFLYMARTVRANRARLIVGATLMIPLVSLSSYLGLVTGLTAGPIEMPAAHALAGEDVLSQWGRYLTWTLSTPMILLALGWLAEVDTADLFVVIAADIGMCLTGLAAALTTSSYAFRWAFYLVSTAFFVVVLYALLAKWPTNAEAAGTGDIFGTLRWLTVILWLGYPILWALGVEGFALVDSVGLTSWGYSLLDIGAKYLFAALLLRWVANNERTIAVGQRSGRGAIGDPVED.

Residues 1–31 (MRSRTYHDQSVCGPYGSQRTDCDRDTDAGSD) are disordered. Residues 1 to 45 (MRSRTYHDQSVCGPYGSQRTDCDRDTDAGSDTDVHGAQVATQIRT) lie on the Extracellular side of the membrane. A helical membrane pass occupies residues 46–71 (DTLLHSSLWVNIALAGLSILVFLYMA). Residues 72-77 (RTVRAN) are Cytoplasmic-facing. The helical transmembrane segment at 78 to 101 (RARLIVGATLMIPLVSLSSYLGLV) threads the bilayer. Residues 102-125 (TGLTAGPIEMPAAHALAGEDVLSQ) lie on the Extracellular side of the membrane. A helical transmembrane segment spans residues 126-147 (WGRYLTWTLSTPMILLALGWLA). The Cytoplasmic portion of the chain corresponds to 148–150 (EVD). The chain crosses the membrane as a helical span at residues 151-174 (TADLFVVIAADIGMCLTGLAAALT). Over 175 to 177 (TSS) the chain is Extracellular. A helical membrane pass occupies residues 178-200 (YAFRWAFYLVSTAFFVVVLYALL). Residues 201–212 (AKWPTNAEAAGT) lie on the Cytoplasmic side of the membrane. The helical transmembrane segment at 213-236 (GDIFGTLRWLTVILWLGYPILWAL) threads the bilayer. The Extracellular portion of the chain corresponds to 237–246 (GVEGFALVDS). A helical transmembrane segment spans residues 247 to 275 (VGLTSWGYSLLDIGAKYLFAALLLRWVAN). The residue at position 262 (K262) is an N6-(retinylidene)lysine. At 276–297 (NERTIAVGQRSGRGAIGDPVED) the chain is on the cytoplasmic side.

This sequence belongs to the archaeal/bacterial/fungal opsin family.

Its subcellular location is the cell membrane. In terms of biological role, light-driven chloride pump. The chain is Halorhodopsin (hop) from Haloterrigena sp. (strain arg-4).